Consider the following 418-residue polypeptide: Serine hydroxymethyltransferase (418 aa).

(6S)-5,6,7,8-tetrahydrofolate is bound by residues leucine 121 and 125 to 127; that span reads GHL. N6-(pyridoxal phosphate)lysine is present on lysine 230. (6S)-5,6,7,8-tetrahydrofolate-binding positions include glutamate 246 and 355–357; that span reads SPF.

Belongs to the SHMT family. In terms of assembly, homodimer. It depends on pyridoxal 5'-phosphate as a cofactor.

It is found in the cytoplasm. The enzyme catalyses (6R)-5,10-methylene-5,6,7,8-tetrahydrofolate + glycine + H2O = (6S)-5,6,7,8-tetrahydrofolate + L-serine. It participates in one-carbon metabolism; tetrahydrofolate interconversion. It functions in the pathway amino-acid biosynthesis; glycine biosynthesis; glycine from L-serine: step 1/1. Catalyzes the reversible interconversion of serine and glycine with tetrahydrofolate (THF) serving as the one-carbon carrier. This reaction serves as the major source of one-carbon groups required for the biosynthesis of purines, thymidylate, methionine, and other important biomolecules. Also exhibits THF-independent aldolase activity toward beta-hydroxyamino acids, producing glycine and aldehydes, via a retro-aldol mechanism. The protein is Serine hydroxymethyltransferase of Streptococcus pneumoniae (strain Taiwan19F-14).